A 763-amino-acid chain; its full sequence is ATP-dependent RNA helicase glh-1 (763 aa).

The tract at residues 1–30 is disordered; sequence MSDGWSDSESAAKAKTGFGSGGGFGGGNNG. Residues 18–30 are compositionally biased toward gly residues; sequence FGSGGGFGGGNNG. Tandem repeats lie at residues 24 to 33, 34 to 43, 44 to 53, 54 to 63, 64 to 73, 74 to 83, and 84 to 93. The tract at residues 24–93 is 7 X 10 AA tandem repeats, Gly-rich; the sequence is FGGGNNGGSG…FGGGSTGGSP (70 aa). 2 CCHC-type zinc fingers span residues 158–175 and 183–200; these read NNCFNCQQPGHRSSDCPE and RVCYNCQQPGHTSRECTE. The interval 193 to 230 is disordered; the sequence is HTSRECTEERKPREGRTGGFGGGAGFGNNGGNDGFGGD. Over residues 194-208 the composition is skewed to basic and acidic residues; that stretch reads TSRECTEERKPREGR. The segment covering 209 to 230 has biased composition (gly residues); that stretch reads TGGFGGGAGFGNNGGNDGFGGD. 2 CCHC-type zinc fingers span residues 242-259 and 262-279; these read MKCFNCKGEGHRSAECPE and RGCFNCGEQGHRSNECPN. Positions 341–369 match the Q motif motif; it reads KTFAEANLTETMQKNVAHAGYSKTTPIQQ. The Helicase ATP-binding domain maps to 372 to 556; it reads LPLVHQGYDI…RAFLRENYVM (185 aa). 385-392 is a binding site for ATP; that stretch reads AQTGSGKT. Positions 423–427 match the Phosphodegron motif; that stretch reads ILTPT. The DEAD box signature appears at 499–502; it reads DEAD. The Helicase C-terminal domain occupies 592 to 739; it reads DIDSYTTEKS…IVPDWMQGAA (148 aa).

Belongs to the DEAD box helicase family. DDX4/VASA subfamily. As to quaternary structure, interacts with csn-5; this may prevent glh-1 degradation induced by kgb-1. Interacts with zyx-1. Interacts (via the N-terminal region containing the four CCHC zinc fingers) with pan-1. Interacts with kgb-1; this may promote glh-1 degradation by the proteasome. In terms of processing, phosphorylated by kgb-1 (in vitro); this may be responsible for its degradation by the proteasome.

The protein resides in the cytoplasm. It localises to the cytoplasmic granule. The protein localises to the perinuclear region. The catalysed reaction is ATP + H2O = ADP + phosphate + H(+). Its function is as follows. Probable ATP-binding RNA helicase. May act redundantly with the P-granule component glh-4 to regulate the formation of the granular structure of P-granules in embryos. Plays a role in positively regulating the localization of pgl-1 to P-granules. May play a role in transgenerational epigenetic inheritance. May protect somatic cells from excessive apoptosis during normal development. The chain is ATP-dependent RNA helicase glh-1 from Caenorhabditis elegans.